An 86-amino-acid chain; its full sequence is Haditoxin (86 aa).

The N-terminal stretch at 1 to 21 (MKTLLLTLVVVTIVYLDLGYT) is a signal peptide. 4 disulfides stabilise this stretch: C24/C45, C38/C62, C66/C78, and C79/C84.

The protein belongs to the three-finger toxin family. Short-chain subfamily. Orphan group VIII (haditoxin) sub-subfamily. As to quaternary structure, homodimer; non-covalently linked. Expressed by the venom gland.

Its subcellular location is the secreted. Its function is as follows. Antagonist of muscle (alpha-1-beta-1-delta-epsilon/CHRNA1-CHRNB1-CHRND-CHRNE) and neuronal (alpha-7/CHRNA7, alpha-3-beta-2/CHRNA3-CHRNB2, alpha-4-beta-2/CHRNA4-CHRNB2) nicotinic acetylcholine receptors (nAChR). The highest affinity is for human alpha-7/CHRNA7 nAChRs (IC(50)=180 nM), compared to human alpha-1-beta-1-delta-epsilon/CHRNA1-CHRNB1-CHRND-CHRNE nAChR (IC(50)= 550 nM), alpha-3-beta-2/CHRNA3-CHRNB2 nAChR (IC(50)=500 nM), and alpha-4-beta-2/CHRNA4-CHRNB2 nAChR (IC(50)=2.6 uM). This Ophiophagus hannah (King cobra) protein is Haditoxin.